A 116-amino-acid polypeptide reads, in one-letter code: T cell receptor alpha variable 19 (116 aa).

The N-terminal stretch at 1–21 (MLTASLLRAVIASICVVSSMA) is a signal peptide. The region spanning 22 to 116 (QKVTQAQTEI…SAVYFCALSE (95 aa)) is the Ig-like domain. An intrachain disulfide couples Cys-43 to Cys-112. Residue Asn-96 is glycosylated (N-linked (GlcNAc...) asparagine).

In terms of assembly, alpha-beta TR is a heterodimer composed of an alpha and beta chain; disulfide-linked. The alpha-beta TR is associated with the transmembrane signaling CD3 coreceptor proteins to form the TR-CD3 (TcR or TCR). The assembly of alpha-beta TR heterodimers with CD3 occurs in the endoplasmic reticulum where a single alpha-beta TR heterodimer associates with one CD3D-CD3E heterodimer, one CD3G-CD3E heterodimer and one CD247 homodimer forming a stable octameric structure. CD3D-CD3E and CD3G-CD3E heterodimers preferentially associate with TR alpha and TR beta chains, respectively. The association of the CD247 homodimer is the last step of TcR assembly in the endoplasmic reticulum and is required for transport to the cell surface.

It localises to the cell membrane. Functionally, v region of the variable domain of T cell receptor (TR) alpha chain that participates in the antigen recognition. Alpha-beta T cell receptors are antigen specific receptors which are essential to the immune response and are present on the cell surface of T lymphocytes. Recognize peptide-major histocompatibility (MH) (pMH) complexes that are displayed by antigen presenting cells (APC), a prerequisite for efficient T cell adaptive immunity against pathogens. Binding of alpha-beta TR to pMH complex initiates TR-CD3 clustering on the cell surface and intracellular activation of LCK that phosphorylates the ITAM motifs of CD3G, CD3D, CD3E and CD247 enabling the recruitment of ZAP70. In turn ZAP70 phosphorylates LAT, which recruits numerous signaling molecules to form the LAT signalosome. The LAT signalosome propagates signal branching to three major signaling pathways, the calcium, the mitogen-activated protein kinase (MAPK) kinase and the nuclear factor NF-kappa-B (NF-kB) pathways, leading to the mobilization of transcription factors that are critical for gene expression and essential for T cell growth and differentiation. The T cell repertoire is generated in the thymus, by V-(D)-J rearrangement. This repertoire is then shaped by intrathymic selection events to generate a peripheral T cell pool of self-MH restricted, non-autoaggressive T cells. Post-thymic interaction of alpha-beta TR with the pMH complexes shapes TR structural and functional avidity. The polypeptide is T cell receptor alpha variable 19 (Homo sapiens (Human)).